The chain runs to 355 residues: UDP-N-acetylglucosamine--N-acetylmuramyl-(pentapeptide) pyrophosphoryl-undecaprenol N-acetylglucosamine transferase (355 aa).

UDP-N-acetyl-alpha-D-glucosamine contacts are provided by residues 15 to 17, N127, R163, S191, I244, 263 to 268, and Q288; these read TGG and ALTVSE.

The protein belongs to the glycosyltransferase 28 family. MurG subfamily.

It is found in the cell inner membrane. It carries out the reaction di-trans,octa-cis-undecaprenyl diphospho-N-acetyl-alpha-D-muramoyl-L-alanyl-D-glutamyl-meso-2,6-diaminopimeloyl-D-alanyl-D-alanine + UDP-N-acetyl-alpha-D-glucosamine = di-trans,octa-cis-undecaprenyl diphospho-[N-acetyl-alpha-D-glucosaminyl-(1-&gt;4)]-N-acetyl-alpha-D-muramoyl-L-alanyl-D-glutamyl-meso-2,6-diaminopimeloyl-D-alanyl-D-alanine + UDP + H(+). Its pathway is cell wall biogenesis; peptidoglycan biosynthesis. In terms of biological role, cell wall formation. Catalyzes the transfer of a GlcNAc subunit on undecaprenyl-pyrophosphoryl-MurNAc-pentapeptide (lipid intermediate I) to form undecaprenyl-pyrophosphoryl-MurNAc-(pentapeptide)GlcNAc (lipid intermediate II). This is UDP-N-acetylglucosamine--N-acetylmuramyl-(pentapeptide) pyrophosphoryl-undecaprenol N-acetylglucosamine transferase from Salmonella dublin (strain CT_02021853).